The chain runs to 922 residues: Metabotropic glutamate receptor 7 (922 aa).

Positions 1 to 34 (MVQLRKLLRVLTLMKFPCCVLEVLLCALAAAARG) are cleaved as a signal peptide. Residues 35-590 (QEMYAPHSIR…IIKLEWHSPW (556 aa)) are Extracellular-facing. Cysteine 67 and cysteine 109 are disulfide-bonded. Residue asparagine 98 is glycosylated (N-linked (GlcNAc...) asparagine). L-glutamate-binding positions include serine 159, 180 to 182 (AST), tyrosine 230, and aspartate 314. Disulfide bonds link cysteine 249-cysteine 541, cysteine 374-cysteine 390, cysteine 430-cysteine 437, cysteine 523-cysteine 542, cysteine 527-cysteine 545, cysteine 548-cysteine 560, and cysteine 563-cysteine 576. Lysine 407 contacts L-glutamate. 2 N-linked (GlcNAc...) asparagine glycosylation sites follow: asparagine 458 and asparagine 486. N-linked (GlcNAc...) asparagine glycosylation occurs at asparagine 572. A helical membrane pass occupies residues 591–615 (AVIPVFLAMLGIIATIFVMATFIRY). The Cytoplasmic portion of the chain corresponds to 616–627 (NDTPIVRASGRE). The helical transmembrane segment at 628-648 (LSYVLLTGIFLCYIITFLMIA) threads the bilayer. At 649–654 (KPDVAV) the chain is on the extracellular side. Residues 655–675 (CSFRRVFLGLGMCISYAALLT) traverse the membrane as a helical segment. Residues 676–702 (KTNRIYRIFEQGKKSVTAPRLISPTSQ) lie on the Cytoplasmic side of the membrane. A helical transmembrane segment spans residues 703–723 (LAITSSLISVQLLGVFIWFGV). Residues 724 to 753 (DPPNIIIDYDEHKTMNPEQARGVLKCDITD) lie on the Extracellular side of the membrane. Residues 754 to 775 (LQIICSLGYSILLMVTCTVYAI) form a helical membrane-spanning segment. Topologically, residues 776–788 (KTRGVPENFNEAK) are cytoplasmic. Residues 789–810 (PIGFTMYTTCIVWLAFIPIFFG) traverse the membrane as a helical segment. Over 811 to 825 (TAQSAEKLYIQTTTL) the chain is Extracellular. A helical membrane pass occupies residues 826–850 (TISMNLSASVALGMLYMPKVYIIIF). Residues 851–922 (HPELNVQKRK…VTWYTIPPTV (72 aa)) lie on the Cytoplasmic side of the membrane.

It belongs to the G-protein coupled receptor 3 family. As to quaternary structure, homodimer. Interacts with PICK1.

The protein resides in the cell membrane. In terms of biological role, G-protein coupled receptor activated by glutamate that regulates axon outgrowth through the MAPK-cAMP-PKA signaling pathway during neuronal development. Ligand binding causes a conformation change that triggers signaling via guanine nucleotide-binding proteins (G proteins) and modulates the activity of downstream effectors, such as adenylate cyclase that it inhibits. The sequence is that of Metabotropic glutamate receptor 7 (GRM7) from Pongo abelii (Sumatran orangutan).